We begin with the raw amino-acid sequence, 250 residues long: NADH-quinone oxidoreductase subunit B 2 (250 aa).

Cys-41, Cys-42, Cys-107, and Cys-137 together coordinate [4Fe-4S] cluster.

This sequence belongs to the complex I 20 kDa subunit family. In terms of assembly, NDH-1 is composed of 14 different subunits. Subunits NuoB, C, D, E, F, and G constitute the peripheral sector of the complex. It depends on [4Fe-4S] cluster as a cofactor.

Its subcellular location is the cell membrane. The enzyme catalyses a quinone + NADH + 5 H(+)(in) = a quinol + NAD(+) + 4 H(+)(out). NDH-1 shuttles electrons from NADH, via FMN and iron-sulfur (Fe-S) centers, to quinones in the respiratory chain. The immediate electron acceptor for the enzyme in this species is believed to be ubiquinone. Couples the redox reaction to proton translocation (for every two electrons transferred, four hydrogen ions are translocated across the cytoplasmic membrane), and thus conserves the redox energy in a proton gradient. The protein is NADH-quinone oxidoreductase subunit B 2 of Herpetosiphon aurantiacus (strain ATCC 23779 / DSM 785 / 114-95).